A 689-amino-acid polypeptide reads, in one-letter code: Glycine--tRNA ligase beta subunit (689 aa).

The protein belongs to the class-II aminoacyl-tRNA synthetase family. Tetramer of two alpha and two beta subunits.

It localises to the cytoplasm. It catalyses the reaction tRNA(Gly) + glycine + ATP = glycyl-tRNA(Gly) + AMP + diphosphate. The protein is Glycine--tRNA ligase beta subunit of Escherichia coli (strain K12 / MC4100 / BW2952).